Reading from the N-terminus, the 414-residue chain is Ornithine aminotransferase (414 aa).

Cys-154 and Cys-163 are disulfide-bonded. At Lys-262 the chain carries N6-(pyridoxal phosphate)lysine.

The protein belongs to the class-III pyridoxal-phosphate-dependent aminotransferase family. In terms of assembly, homodimer. It depends on pyridoxal 5'-phosphate as a cofactor. The disulfide bond between Cys-154 and Cys-163 is reduced by TRX1 which increases OAT catalytic activity.

Its subcellular location is the cytoplasm. The catalysed reaction is a 2-oxocarboxylate + L-ornithine = L-glutamate 5-semialdehyde + an L-alpha-amino acid. It carries out the reaction L-ornithine + 2-oxoglutarate = L-glutamate 5-semialdehyde + L-glutamate. It participates in amino-acid biosynthesis; L-proline biosynthesis; L-glutamate 5-semialdehyde from L-ornithine: step 1/1. Its activity is regulated as follows. Unlike for mammalian OATs, activity is increased by TRX1-mediated reduction of the disulfide bond between Cys-154 and Cys-163. Binding to TRX1 may also induce conformational changes that facilitate substrate binding. In terms of biological role, the enzyme has a very narrow substrate specificity and can only catalyze the transamination of alpha-ketoglutarate with ornithine or N-acetylornithine and, to a lesser extent, of glutamate-5-semialdehyde with glutamate and alanine. This chain is Ornithine aminotransferase, found in Plasmodium falciparum (isolate 3D7).